The chain runs to 53 residues: Bowman-Birk type proteinase inhibitor II-4 (53 aa).

4 disulfides stabilise this stretch: cysteine 8/cysteine 23, cysteine 13/cysteine 21, cysteine 30/cysteine 37, and cysteine 34/cysteine 49.

It belongs to the Bowman-Birk serine protease inhibitor family.

This is Bowman-Birk type proteinase inhibitor II-4 from Triticum aestivum (Wheat).